We begin with the raw amino-acid sequence, 123 residues long: Small ribosomal subunit protein uS12 (123 aa).

D89 is modified (3-methylthioaspartic acid).

The protein belongs to the universal ribosomal protein uS12 family. In terms of assembly, part of the 30S ribosomal subunit. Contacts proteins S8 and S17. May interact with IF1 in the 30S initiation complex.

With S4 and S5 plays an important role in translational accuracy. Its function is as follows. Interacts with and stabilizes bases of the 16S rRNA that are involved in tRNA selection in the A site and with the mRNA backbone. Located at the interface of the 30S and 50S subunits, it traverses the body of the 30S subunit contacting proteins on the other side and probably holding the rRNA structure together. The combined cluster of proteins S8, S12 and S17 appears to hold together the shoulder and platform of the 30S subunit. The protein is Small ribosomal subunit protein uS12 of Bartonella bacilliformis (strain ATCC 35685 / KC583 / Herrer 020/F12,63).